Here is a 245-residue protein sequence, read N- to C-terminus: MIIPALDLIDGTVVRLHQGDYARQRDYGNDPLPRLQDYAAQGAGVLHLVDLTGAKDPAKRQIPLIKTLVAGVNVPVQVGGGVRTEEDVAALLKAGVARVVIGSTAVKSPDVVKGWFERFGAQALVLALDVRIDEHGNKQVAVSGWQENSGVSLEQLVETYLPVGLKHVLCTDISRDGTLAGSNVSLYEEICARYPQIAFQSSGGIGDIDDIAALRGTGVRGVIVGRALLEGKFTVKEAIQCWQNV.

Asp-7 acts as the Proton acceptor in catalysis. The active-site Proton donor is the Asp-129.

Belongs to the HisA/HisF family.

It localises to the cytoplasm. The catalysed reaction is 1-(5-phospho-beta-D-ribosyl)-5-[(5-phospho-beta-D-ribosylamino)methylideneamino]imidazole-4-carboxamide = 5-[(5-phospho-1-deoxy-D-ribulos-1-ylimino)methylamino]-1-(5-phospho-beta-D-ribosyl)imidazole-4-carboxamide. It participates in amino-acid biosynthesis; L-histidine biosynthesis; L-histidine from 5-phospho-alpha-D-ribose 1-diphosphate: step 4/9. This is 1-(5-phosphoribosyl)-5-[(5-phosphoribosylamino)methylideneamino] imidazole-4-carboxamide isomerase from Salmonella enteritidis PT4 (strain P125109).